The following is a 61-amino-acid chain: Small ribosomal subunit protein uS14 (61 aa).

Positions 24, 27, 40, and 43 each coordinate Zn(2+).

Belongs to the universal ribosomal protein uS14 family. Zinc-binding uS14 subfamily. In terms of assembly, part of the 30S ribosomal subunit. Contacts proteins S3 and S10. Requires Zn(2+) as cofactor.

In terms of biological role, binds 16S rRNA, required for the assembly of 30S particles and may also be responsible for determining the conformation of the 16S rRNA at the A site. The sequence is that of Small ribosomal subunit protein uS14 from Borrelia hermsii (strain HS1 / DAH).